The following is a 398-amino-acid chain: MAKEKYDRSKPHVNIGTIGHVDHGKTTLTAAITTVLARRLPSSVNQPKDYASIDAAPEERERGITINTAHVEYETEKRHYAHIDAPGHADYVKNMITGAAQMDGAILVVASTDGPMPQTREHILLSRQVGVKHLIVFMNKVDLVDDEELLELVEMEIRDLLSEYDFPGDDLPVIQGSALKALEGDSKYEDIVMELMNTVDEYIPEPERDTDKPLLLPVEDVFSITGRGTVASGRIDRGTVRVNDEIEIVGLQEEKSKAVVTGVEMFRKQLDEGLAGDNVGVLLRGVQRDEIERGQVISKPGSINPHTKFKGEVYILTKEEGGRHTPFFDNYRPQFYFRTTDVTGSIKLPEGTEMVMPGDNVTIDVELIHPIAVEQGTTFSIREGGRTVGSGMVTEIEA.

In terms of domain architecture, tr-type G spans 10-207; it reads KPHVNIGTIG…TVDEYIPEPE (198 aa). The tract at residues 19–26 is G1; the sequence is GHVDHGKT. 19 to 26 is a binding site for GTP; that stretch reads GHVDHGKT. Thr26 contacts Mg(2+). The tract at residues 63–67 is G2; it reads GITIN. The interval 84 to 87 is G3; that stretch reads DAPG. GTP is bound by residues 84–88 and 139–142; these read DAPGH and NKVD. The G4 stretch occupies residues 139–142; it reads NKVD. Residues 177 to 179 form a G5 region; the sequence is SAL.

Belongs to the TRAFAC class translation factor GTPase superfamily. Classic translation factor GTPase family. EF-Tu/EF-1A subfamily. Monomer.

The protein resides in the cytoplasm. It catalyses the reaction GTP + H2O = GDP + phosphate + H(+). Functionally, GTP hydrolase that promotes the GTP-dependent binding of aminoacyl-tRNA to the A-site of ribosomes during protein biosynthesis. This chain is Elongation factor Tu, found in Streptococcus suis (strain 98HAH33).